The primary structure comprises 343 residues: Ribosomal RNA small subunit methyltransferase C (343 aa).

This sequence belongs to the methyltransferase superfamily. RsmC family. In terms of assembly, monomer.

Its subcellular location is the cytoplasm. It carries out the reaction guanosine(1207) in 16S rRNA + S-adenosyl-L-methionine = N(2)-methylguanosine(1207) in 16S rRNA + S-adenosyl-L-homocysteine + H(+). Specifically methylates the guanine in position 1207 of 16S rRNA in the 30S particle. The polypeptide is Ribosomal RNA small subunit methyltransferase C (Escherichia coli O6:H1 (strain CFT073 / ATCC 700928 / UPEC)).